The chain runs to 303 residues: RELT-like protein 2 (303 aa).

Residues 15–35 (LYMLFLLVLVFFLMGLVGFMI) form a helical membrane-spanning segment. Disordered stretches follow at residues 47–68 (RTSR…DDVN), 135–214 (CSRS…QPRT), and 249–303 (PCTL…AGGM). At S52 the chain carries Phosphoserine. 2 stretches are compositionally biased toward basic and acidic residues: residues 148–158 (RSKEGKSRPRP) and 172–188 (THIE…DGSP). The span at 194–212 (GSGGGQEPGGSQAAGGGQP) shows a compositional bias: gly residues. Polar residues predominate over residues 274-295 (GLSSQEANGQPTKLDTSGQQES).

Belongs to the RELT family. As to quaternary structure, interacts with RELT, RELL1, OXSR1, PLSCR1 and TRAF2.

The protein localises to the cell membrane. Functionally, induces activation of MAPK14/p38 cascade, when overexpressed. Induces apoptosis, when overexpressed. The protein is RELT-like protein 2 (Rell2) of Mus musculus (Mouse).